The primary structure comprises 334 residues: Probable GTP 3',8-cyclase (334 aa).

Positions 24-256 (PYGRKVTGLR…RKKYIIDGVE (233 aa)) constitute a Radical SAM core domain. Arginine 33 serves as a coordination point for GTP. Positions 40 and 44 each coordinate [4Fe-4S] cluster. Tyrosine 46 serves as a coordination point for S-adenosyl-L-methionine. Cysteine 47 contacts [4Fe-4S] cluster. Lysine 85 contacts GTP. Glycine 89 is an S-adenosyl-L-methionine binding site. Residue threonine 113 participates in GTP binding. Serine 137 is a binding site for S-adenosyl-L-methionine. Position 176 (lysine 176) interacts with GTP. Residues cysteine 269 and cysteine 272 each contribute to the [4Fe-4S] cluster site. Residue 274–276 (RLR) participates in GTP binding. Cysteine 286 contributes to the [4Fe-4S] cluster binding site.

Belongs to the radical SAM superfamily. MoaA family. The cofactor is [4Fe-4S] cluster.

The catalysed reaction is GTP + AH2 + S-adenosyl-L-methionine = (8S)-3',8-cyclo-7,8-dihydroguanosine 5'-triphosphate + 5'-deoxyadenosine + L-methionine + A + H(+). It participates in cofactor biosynthesis; molybdopterin biosynthesis. In terms of biological role, catalyzes the cyclization of GTP to (8S)-3',8-cyclo-7,8-dihydroguanosine 5'-triphosphate. The chain is Probable GTP 3',8-cyclase from Methanosarcina acetivorans (strain ATCC 35395 / DSM 2834 / JCM 12185 / C2A).